The chain runs to 190 residues: Small ribosomal subunit protein eS7 (190 aa).

This sequence belongs to the eukaryotic ribosomal protein eS7 family. Component of the small ribosomal subunit. Part of the small subunit (SSU) processome, composed of more than 70 proteins and the RNA chaperone small nucleolar RNA (snoRNA) U3.

It localises to the cytoplasm. It is found in the cytoskeleton. The protein resides in the microtubule organizing center. Its subcellular location is the centrosome. The protein localises to the nucleus. It localises to the nucleolus. Component of the small ribosomal subunit. The ribosome is a large ribonucleoprotein complex responsible for the synthesis of proteins in the cell. Required for rRNA maturation. Part of the small subunit (SSU) processome, first precursor of the small eukaryotic ribosomal subunit. During the assembly of the SSU processome in the nucleolus, many ribosome biogenesis factors, an RNA chaperone and ribosomal proteins associate with the nascent pre-rRNA and work in concert to generate RNA folding, modifications, rearrangements and cleavage as well as targeted degradation of pre-ribosomal RNA by the RNA exosome. This is Small ribosomal subunit protein eS7 (RpS7) from Spodoptera frugiperda (Fall armyworm).